A 1213-amino-acid chain; its full sequence is Protein jagged-1b (1213 aa).

An N-terminal signal peptide occupies residues 1–26; sequence MILRRSSVFSAFYLHAFLLCLRTTVS. The Extracellular segment spans residues 27–1064; that stretch reads DASGHFELEI…HQIPSPKTDY (1038 aa). Residue Asn-139 is glycosylated (N-linked (GlcNAc...) asparagine). The 45-residue stretch at 182–226 folds into the DSL domain; sequence VTCLEHYYGFGCNKFCRPRDEFFGHYTCDQNGNKTCLEGWTGPDC. 2 disulfides stabilise this stretch: Cys-184/Cys-193 and Cys-197/Cys-209. N-linked (GlcNAc...) asparagine glycosylation occurs at Asn-214. Cystine bridges form between Cys-217–Cys-226, Cys-231–Cys-242, Cys-235–Cys-248, Cys-250–Cys-259, Cys-262–Cys-273, Cys-268–Cys-279, Cys-281–Cys-290, Cys-297–Cys-309, Cys-303–Cys-319, Cys-321–Cys-330, Cys-337–Cys-348, Cys-342–Cys-357, Cys-359–Cys-368, Cys-375–Cys-386, Cys-380–Cys-395, Cys-397–Cys-406, Cys-413–Cys-424, Cys-418–Cys-433, Cys-435–Cys-444, Cys-451–Cys-461, Cys-455–Cys-470, Cys-472–Cys-481, Cys-488–Cys-499, Cys-493–Cys-508, Cys-510–Cys-519, Cys-526–Cys-537, Cys-531–Cys-546, Cys-548–Cys-557, Cys-596–Cys-612, Cys-614–Cys-623, Cys-630–Cys-641, Cys-635–Cys-650, Cys-652–Cys-661, Cys-668–Cys-679, Cys-673–Cys-688, Cys-690–Cys-699, Cys-706–Cys-717, Cys-711–Cys-726, and Cys-728–Cys-737. The region spanning 227–260 is the EGF-like 1 domain; sequence NTAICRQGCSTEHGSCKQPGGCKCLYGWQGPYCD. One can recognise an EGF-like 2; atypical domain in the interval 261–291; it reads KCIPHPGCVHGTCVEPWQCLCDTNWGGQLCD. EGF-like domains lie at 293 to 331 and 333 to 369; these read DLNY…VNCE and AEHA…TSCE. Residues 371–407 form the EGF-like 5; calcium-binding domain; that stretch reads NVDDCTPNQCKHGGTCQDLVNGFKCACPPHWTGKTCQ. The EGF-like 6; calcium-binding domain occupies 409–445; sequence DANECEDKPCVNAKSCHNLIGAYFCECLPGWSGQNCD. Positions 447 to 482 constitute an EGF-like 7; calcium-binding domain; the sequence is NINDCKGQCLNGGTCKDLVNGYRCLCPPGYTGEQCE. One can recognise an EGF-like 8; calcium-binding domain in the interval 484–520; sequence DVDECASSPCLNGGRCQDEVNGFQCLCPAGFSGQLCQ. EGF-like domains are found at residues 522–558 and 592–624; these read DIDY…KNCS and SSNV…TYCH. Residue Asn-556 is glycosylated (N-linked (GlcNAc...) asparagine). The 37-residue stretch at 626–662 folds into the EGF-like 11; calcium-binding domain; sequence NINDCESNPCRNGGTCIDKVNVYQCICADGWEGVHCE. Positions 664-700 constitute an EGF-like 12; calcium-binding domain; it reads NIDDCSLNPCLNKGACQDLVNDFYCECRNGWKGKTCH. One can recognise an EGF-like 13 domain in the interval 702 to 738; it reads RDSQCDEATCNNGGTCHDEGDTFKCRCSPGWEGATCN. N-linked (GlcNAc...) asparagine glycosylation is present at Asn-742. Cystine bridges form between Cys-745–Cys-756, Cys-750–Cys-765, Cys-767–Cys-776, Cys-783–Cys-794, Cys-788–Cys-803, Cys-805–Cys-814, Cys-821–Cys-832, Cys-826–Cys-841, and Cys-843–Cys-852. The EGF-like 14 domain maps to 746 to 777; it reads LPNPCENGGTCVVNGDSFNCVCKEGWEGSTCT. An EGF-like 15; calcium-binding domain is found at 779–815; that stretch reads NTNDCNPHPCYNSGTCVDGENWYRCECAPGFAGPDCR. An EGF-like 16; calcium-binding domain is found at 817-853; the sequence is NINECQSSPCAFGSTCVDEINGYRCLCPPGRIGPDCQ. Residues 860–914 form the VWFC domain; that stretch reads CIANGQVTADGAKWEEDCNICQCQNGRIHCTMMWCGPKSCRIGKARGGCPASQSC. In terms of domain architecture, EGF-like 17 spans 918–956; sequence KEEQCFVKPCPSLGECWPSAPPPPSKCHASFSYQDDSCA. N-linked (GlcNAc...) asparagine glycosylation is found at Asn-957, Asn-988, and Asn-1042. A helical membrane pass occupies residues 1065-1087; the sequence is LVPLLSSIFIVLWIFALASAFLW. Residues 1088–1213 are Cytoplasmic-facing; the sequence is CIHRRRKQNT…QSLNRMEYIV (126 aa). Positions 1181 to 1202 are disordered; sequence EERAPNKNPNWTNKQDNRDLET.

Its subcellular location is the membrane. It is found in the cell membrane. Ligand for Notch receptors and involved in the mediation of Notch signaling. Seems to be involved in cell-fate decisions. The sequence is that of Protein jagged-1b (jag1b) from Danio rerio (Zebrafish).